We begin with the raw amino-acid sequence, 521 residues long: GMP synthase [glutamine-hydrolyzing] (521 aa).

A Glutamine amidotransferase type-1 domain is found at 5–197 (KILILDFGSQ…VLDICGAQPS (193 aa)). The active-site Nucleophile is C81. Residues H171 and E173 contribute to the active site. Residues 198-390 (WTMPNYIEEA…LGLPREMVYR (193 aa)) enclose the GMPS ATP-PPase domain. 225–231 (SGGVDSS) is a binding site for ATP.

In terms of assembly, homodimer.

The enzyme catalyses XMP + L-glutamine + ATP + H2O = GMP + L-glutamate + AMP + diphosphate + 2 H(+). The protein operates within purine metabolism; GMP biosynthesis; GMP from XMP (L-Gln route): step 1/1. Functionally, catalyzes the synthesis of GMP from XMP. This Neisseria meningitidis serogroup C / serotype 2a (strain ATCC 700532 / DSM 15464 / FAM18) protein is GMP synthase [glutamine-hydrolyzing].